A 131-amino-acid chain; its full sequence is Type 3 secretion system pilotin (131 aa).

A signal peptide spans 1–15 (MSRIIALIISFLLVG). C16 is lipidated: N-palmitoyl cysteine. C16 is lipidated: S-diacylglycerol cysteine.

This sequence belongs to the ExsB/YscW family. In terms of assembly, interacts with YscC/SctC.

It localises to the cell outer membrane. In terms of biological role, involved in the synthesis of the type III secretion system (T3SS), also called injectisome, which is used to inject bacterial effector proteins into eukaryotic host cells. Pilot protein that is required for the proper localization of the secretin YscC/SctC in the outer membrane. Also required for efficient oligomerization of YscC/SctC and stabilization of the oligomers. The protein is Type 3 secretion system pilotin of Yersinia enterocolitica.